A 357-amino-acid chain; its full sequence is Ribosomal RNA large subunit methyltransferase F (357 aa).

Positions 1–15 are enriched in polar residues; it reads MPKPPRSTQILSCNA. The segment at 1-33 is disordered; the sequence is MPKPPRSTQILSCNAPNGKPKTQHPSARAKVKR.

The protein belongs to the methyltransferase superfamily. METTL16/RlmF family.

It localises to the cytoplasm. The enzyme catalyses adenosine(1618) in 23S rRNA + S-adenosyl-L-methionine = N(6)-methyladenosine(1618) in 23S rRNA + S-adenosyl-L-homocysteine + H(+). Its function is as follows. Specifically methylates the adenine in position 1618 of 23S rRNA. This is Ribosomal RNA large subunit methyltransferase F from Shewanella putrefaciens (strain CN-32 / ATCC BAA-453).